The following is a 203-amino-acid chain: N-(5'-phosphoribosyl)anthranilate isomerase (203 aa).

The protein belongs to the TrpF family.

It catalyses the reaction N-(5-phospho-beta-D-ribosyl)anthranilate = 1-(2-carboxyphenylamino)-1-deoxy-D-ribulose 5-phosphate. The protein operates within amino-acid biosynthesis; L-tryptophan biosynthesis; L-tryptophan from chorismate: step 3/5. The polypeptide is N-(5'-phosphoribosyl)anthranilate isomerase (Geobacter sulfurreducens (strain ATCC 51573 / DSM 12127 / PCA)).